The chain runs to 173 residues: Crossover junction endodeoxyribonuclease RuvC (173 aa).

Catalysis depends on residues Asp-10, Glu-71, and Asp-143. The Mg(2+) site is built by Asp-10, Glu-71, and Asp-143.

This sequence belongs to the RuvC family. As to quaternary structure, homodimer which binds Holliday junction (HJ) DNA. The HJ becomes 2-fold symmetrical on binding to RuvC with unstacked arms; it has a different conformation from HJ DNA in complex with RuvA. In the full resolvosome a probable DNA-RuvA(4)-RuvB(12)-RuvC(2) complex forms which resolves the HJ. Mg(2+) is required as a cofactor.

The protein resides in the cytoplasm. The enzyme catalyses Endonucleolytic cleavage at a junction such as a reciprocal single-stranded crossover between two homologous DNA duplexes (Holliday junction).. The RuvA-RuvB-RuvC complex processes Holliday junction (HJ) DNA during genetic recombination and DNA repair. Endonuclease that resolves HJ intermediates. Cleaves cruciform DNA by making single-stranded nicks across the HJ at symmetrical positions within the homologous arms, yielding a 5'-phosphate and a 3'-hydroxyl group; requires a central core of homology in the junction. The consensus cleavage sequence is 5'-(A/T)TT(C/G)-3'. Cleavage occurs on the 3'-side of the TT dinucleotide at the point of strand exchange. HJ branch migration catalyzed by RuvA-RuvB allows RuvC to scan DNA until it finds its consensus sequence, where it cleaves and resolves the cruciform DNA. The sequence is that of Crossover junction endodeoxyribonuclease RuvC from Gloeobacter violaceus (strain ATCC 29082 / PCC 7421).